Here is a 193-residue protein sequence, read N- to C-terminus: Nucleoside triphosphate pyrophosphatase (193 aa).

Residue D70 is the Proton acceptor of the active site.

Belongs to the Maf family. A divalent metal cation serves as cofactor.

The protein resides in the cytoplasm. The catalysed reaction is a ribonucleoside 5'-triphosphate + H2O = a ribonucleoside 5'-phosphate + diphosphate + H(+). It catalyses the reaction a 2'-deoxyribonucleoside 5'-triphosphate + H2O = a 2'-deoxyribonucleoside 5'-phosphate + diphosphate + H(+). Functionally, nucleoside triphosphate pyrophosphatase. May have a dual role in cell division arrest and in preventing the incorporation of modified nucleotides into cellular nucleic acids. This chain is Nucleoside triphosphate pyrophosphatase, found in Anaplasma phagocytophilum (strain HZ).